Here is an 89-residue protein sequence, read N- to C-terminus: Small ribosomal subunit protein uS15 (89 aa).

It belongs to the universal ribosomal protein uS15 family. As to quaternary structure, part of the 30S ribosomal subunit. Forms a bridge to the 50S subunit in the 70S ribosome, contacting the 23S rRNA.

Functionally, one of the primary rRNA binding proteins, it binds directly to 16S rRNA where it helps nucleate assembly of the platform of the 30S subunit by binding and bridging several RNA helices of the 16S rRNA. Its function is as follows. Forms an intersubunit bridge (bridge B4) with the 23S rRNA of the 50S subunit in the ribosome. The protein is Small ribosomal subunit protein uS15 of Prosthecochloris aestuarii (strain DSM 271 / SK 413).